Reading from the N-terminus, the 930-residue chain is Progesterone receptor (930 aa).

Basic and acidic residues predominate over residues 1–11; that stretch reads MTELKAKEPRA. Disordered regions lie at residues 1–133 and 148–260; these read MTEL…ASPA and LPED…SGAA. The interval 1 to 165 is AF3; mediates transcriptional activation; it reads MTELKAKEPR…PATKGVLAPL (165 aa). The modulating, Pro-Rich stretch occupies residues 1 to 565; it reads MTELKAKEPR…PQYSFESLPQ (565 aa). Lys7 participates in a covalent cross-link: Glycyl lysine isopeptide (Lys-Gly) (interchain with G-Cter in SUMO). A Phosphoserine modification is found at Ser20. Over residues 38–49 the composition is skewed to polar residues; the sequence is QGSQTSEASSVV. The LXXL motif 1 signature appears at 56-60; it reads LDGLL. Position 82 is a phosphoserine (Ser82). The short motif at 116 to 120 is the LXXL motif 2 element; it reads LDTLL. Ser131 is subject to Phosphoserine. A mediates transcriptional transrepression region spans residues 166 to 304; the sequence is MSRPEDKAGD…LATSVVDFIH (139 aa). The Nuclear localization signal signature appears at 184 to 188; that stretch reads KVLPR. Residues 187–204 show a composition bias toward low complexity; sequence PRGLSPSRQLLLPSSGSP. 2 positions are modified to phosphoserine: Ser191 and Ser212. Residue Ser293 is modified to Phosphoserine; by MAPK1. The segment at 334-356 is disordered; the sequence is AASPFVPQRGSPSASSTPVAGGD. A Phosphoserine; by MAPK modification is found at Ser344. Lys387 participates in a covalent cross-link: Glycyl lysine isopeptide (Lys-Gly) (interchain with G-Cter in SUMO); alternate. A Glycyl lysine isopeptide (Lys-Gly) (interchain with G-Cter in ubiquitin); alternate cross-link involves residue Lys387. Phosphoserine; by CDK2 is present on Ser399. The disordered stretch occupies residues 415–454; it reads DFQLAAPPPPSLPPRVPSSRPGEAAVAASPGSASVSSSSS. The span at 420–430 shows a compositional bias: pro residues; it reads APPPPSLPPRV. The span at 431–454 shows a compositional bias: low complexity; that stretch reads PSSRPGEAAVAASPGSASVSSSSS. The segment at 457 to 547 is AF1; mediates transcriptional activation; sequence STLECILYKA…VYTPYLNYLR (91 aa). Lys532 is covalently cross-linked (Glycyl lysine isopeptide (Lys-Gly) (interchain with G-Cter in SUMO)). The nuclear receptor DNA-binding region spans 566 to 640; that stretch reads KICLICGDEA…AGMVLGGRKF (75 aa). 2 NR C4-type zinc fingers span residues 568–588 and 604–628; these read CLIC…CGSC and CAGR…LRKC. Ser673 carries the post-translational modification Phosphoserine. An NR LBD domain is found at 676–910; the sequence is QEIQLIPPLI…EFPEMMSEVI (235 aa). An AF2; mediates transcriptional activation region spans residues 684 to 930; that stretch reads LINLLMSIEP…MVKPLLFHKK (247 aa). Position 763 (Arg763) interacts with progesterone.

This sequence belongs to the nuclear hormone receptor family. NR3 subfamily. Interacts with SMARD1 and UNC45A. Interacts with CUEDC2; the interaction promotes ubiquitination, decreases sumoylation, and represses transcriptional activity. Interacts with PIAS3; the interaction promotes sumoylation of PR in a hormone-dependent manner, inhibits DNA-binding, and alters nuclear export. Interacts with SP1; the interaction requires ligand-induced phosphorylation on Ser-344 by ERK1/2-MAPK. Interacts with PRMT2. Interacts with NCOA2 and NCOA1. Interacts with KLF9. Interacts with GTF2B. Post-translationally, phosphorylated on multiple serine sites. Several of these sites are hormone-dependent. Phosphorylation on Ser-293 is highly hormone-dependent and modulates ubiquitination and sumoylation on Lys-387. Phosphorylation on Ser-102 and Ser-344 also requires induction by hormone. Basal phosphorylation on Ser-82, Ser-191 and Ser-399 is increased in response to progesterone and can be phosphorylated in vitro by the CDK2-A1 complex. Increased levels of phosphorylation on Ser-399 also in the presence of EGF, heregulin, IGF, PMA and FBS. Phosphorylation at this site by CDK2 is ligand-independent, and increases nuclear translocation and transcriptional activity. Phosphorylation at Ser-293, but not at Ser-191, is impaired during the G(2)/M phase of the cell cycle. Phosphorylation on Ser-344 by ERK1/2 MAPK is required for interaction with SP1. Sumoylation is hormone-dependent and represses transcriptional activity. Sumoylation on all three sites is enhanced by PIAS3. Desumoylated by SENP1. Sumoylation on Lys-387, the main site of sumoylation, is repressed by ubiquitination on the same site, and modulated by phosphorylation at Ser-293. In terms of processing, ubiquitination is hormone-dependent and represses sumoylation on the same site. Promoted by MAPK-mediated phosphorylation on Ser-293. Ubiquitinated by UBR5, leading to its degradation: UBR5 specifically recognizes and binds ligand-bound PGR when it is not associated with coactivators (NCOAs). In presence of NCOAs, the UBR5-degron is not accessible, preventing its ubiquitination and degradation. Post-translationally, palmitoylated by ZDHHC7 and ZDHHC21. Palmitoylation is required for plasma membrane targeting and for rapid intracellular signaling via ERK and AKT kinases and cAMP generation.

The protein localises to the nucleus. It localises to the cytoplasm. Functionally, the steroid hormones and their receptors are involved in the regulation of eukaryotic gene expression and affect cellular proliferation and differentiation in target tissues. Transcriptional activator of several progesteron-dependent promoters in a variety of cell types. Involved in activation of SRC-dependent MAPK signaling on hormone stimulation. The polypeptide is Progesterone receptor (PGR) (Oryctolagus cuniculus (Rabbit)).